Here is a 134-residue protein sequence, read N- to C-terminus: Ribosome-binding factor A (134 aa).

This sequence belongs to the RbfA family. In terms of assembly, monomer. Binds 30S ribosomal subunits, but not 50S ribosomal subunits or 70S ribosomes.

The protein localises to the cytoplasm. One of several proteins that assist in the late maturation steps of the functional core of the 30S ribosomal subunit. Associates with free 30S ribosomal subunits (but not with 30S subunits that are part of 70S ribosomes or polysomes). Required for efficient processing of 16S rRNA. May interact with the 5'-terminal helix region of 16S rRNA. The chain is Ribosome-binding factor A from Parasynechococcus marenigrum (strain WH8102).